Reading from the N-terminus, the 497-residue chain is Indoleacetaldoxime dehydratase (497 aa).

Residues 2–20 (EMILSISLCLTTLITLLLL) traverse the membrane as a helical segment. Cys439 contributes to the heme binding site.

Belongs to the cytochrome P450 family.

Its subcellular location is the membrane. The catalysed reaction is (E)-(indol-3-yl)acetaldehyde oxime = (indol-3-yl)acetonitrile + H2O. Its function is as follows. Involved in the biosynthesis of the indole-derived phytoalexin camalexin. Catalyzes the conversion of indole-3-acetaldoxime to indole-3-acetonitrile. Required for resistance to A.brassicicola and B.cinerea. In Arabidopsis thaliana (Mouse-ear cress), this protein is Indoleacetaldoxime dehydratase (CYP71A13).